A 280-amino-acid chain; its full sequence is Shikimate dehydrogenase (NADP(+)) (280 aa).

Shikimate-binding positions include 20–22 (SLS) and Thr67. The active-site Proton acceptor is Lys71. Glu83 provides a ligand contact to NADP(+). Shikimate-binding residues include Asn92 and Asp107. Residues 131-135 (GAGGA), 155-160 (NRTLNK), and Leu224 each bind NADP(+). Shikimate is bound at residue Tyr226. An NADP(+)-binding site is contributed by Gly247.

This sequence belongs to the shikimate dehydrogenase family. In terms of assembly, homodimer.

The catalysed reaction is shikimate + NADP(+) = 3-dehydroshikimate + NADPH + H(+). The protein operates within metabolic intermediate biosynthesis; chorismate biosynthesis; chorismate from D-erythrose 4-phosphate and phosphoenolpyruvate: step 4/7. Its function is as follows. Involved in the biosynthesis of the chorismate, which leads to the biosynthesis of aromatic amino acids. Catalyzes the reversible NADPH linked reduction of 3-dehydroshikimate (DHSA) to yield shikimate (SA). The protein is Shikimate dehydrogenase (NADP(+)) of Caldanaerobacter subterraneus subsp. tengcongensis (strain DSM 15242 / JCM 11007 / NBRC 100824 / MB4) (Thermoanaerobacter tengcongensis).